The primary structure comprises 276 residues: UPF0276 protein Caul_0757 (276 aa).

It belongs to the UPF0276 family.

The sequence is that of UPF0276 protein Caul_0757 from Caulobacter sp. (strain K31).